The primary structure comprises 287 residues: 2-dehydro-3-deoxyphosphooctonate aldolase (287 aa).

This sequence belongs to the KdsA family.

The protein localises to the cytoplasm. It catalyses the reaction D-arabinose 5-phosphate + phosphoenolpyruvate + H2O = 3-deoxy-alpha-D-manno-2-octulosonate-8-phosphate + phosphate. It functions in the pathway carbohydrate biosynthesis; 3-deoxy-D-manno-octulosonate biosynthesis; 3-deoxy-D-manno-octulosonate from D-ribulose 5-phosphate: step 2/3. It participates in bacterial outer membrane biogenesis; lipopolysaccharide biosynthesis. The sequence is that of 2-dehydro-3-deoxyphosphooctonate aldolase from Rhodopseudomonas palustris (strain HaA2).